An 80-amino-acid polypeptide reads, in one-letter code: UPF0180 protein GK1051 (80 aa).

Belongs to the UPF0180 family.

The sequence is that of UPF0180 protein GK1051 from Geobacillus kaustophilus (strain HTA426).